A 1450-amino-acid chain; its full sequence is DNA-directed RNA polymerase RPB1 homolog (1450 aa).

The protein belongs to the RNA polymerase beta' chain family. As to quaternary structure, part of the viral DNA-directed RNA polymerase that consists of 8 polII-like subunits (RPB1, RPB2, RPB3, RPB5, RPB6, RPB7, RPB9, RPB10), a capping enzyme and a termination factor.

Its subcellular location is the virion. The enzyme catalyses RNA(n) + a ribonucleoside 5'-triphosphate = RNA(n+1) + diphosphate. In terms of biological role, catalytic component of the DNA-directed RNA polymerase (RNAP) that catalyzes the transcription in the cytoplasm of viral DNA into RNA using the four ribonucleoside triphosphates as substrates. Forms the polymerase active center together with RPB2. Part of the core element with the central large cleft, the clamp element that moves to open and close the cleft and the jaws that are thought to grab the incoming DNA template. This chain is DNA-directed RNA polymerase RPB1 homolog, found in Ornithodoros (relapsing fever ticks).